A 587-amino-acid polypeptide reads, in one-letter code: Beta-(1--&gt;2)glucan export ATP-binding/permease protein NdvA (587 aa).

The ABC transmembrane type-1 domain occupies valine 21–glutamate 301. Transmembrane regions (helical) follow at residues leucine 23 to glycine 43, proline 57 to serine 77, leucine 126 to leucine 146, leucine 158 to serine 178, methionine 248 to glycine 268, and isoleucine 272 to methionine 292. The ABC transporter domain maps to isoleucine 335 to alanine 569. Residue glycine 368–threonine 375 coordinates ATP.

This sequence belongs to the ABC transporter superfamily. Beta-(1--&gt;2)glucan exporter (TC 3.A.1.108.1) family. As to quaternary structure, homodimer.

It is found in the cell inner membrane. The catalysed reaction is [(1-&gt;2)-beta-D-glucosyl](n)(in) + ATP + H2O = [(1-&gt;2)-beta-D-glucosyl](n)(out) + ADP + phosphate + H(+). Its function is as follows. Involved in beta-(1--&gt;2)glucan export. Transmembrane domains (TMD) form a pore in the inner membrane and the ATP-binding domain (NBD) is responsible for energy generation. This Rhizobium etli (strain ATCC 51251 / DSM 11541 / JCM 21823 / NBRC 15573 / CFN 42) protein is Beta-(1--&gt;2)glucan export ATP-binding/permease protein NdvA.